The primary structure comprises 345 residues: tRNA N6-adenosine threonylcarbamoyltransferase (345 aa).

Residues His115 and His119 each contribute to the Fe cation site. Substrate contacts are provided by residues 137 to 141 (LVSGG), Asp170, Gly183, Asp187, and Asn276. Asp306 is a Fe cation binding site.

It belongs to the KAE1 / TsaD family. Requires Fe(2+) as cofactor.

The protein resides in the cytoplasm. The enzyme catalyses L-threonylcarbamoyladenylate + adenosine(37) in tRNA = N(6)-L-threonylcarbamoyladenosine(37) in tRNA + AMP + H(+). In terms of biological role, required for the formation of a threonylcarbamoyl group on adenosine at position 37 (t(6)A37) in tRNAs that read codons beginning with adenine. Is involved in the transfer of the threonylcarbamoyl moiety of threonylcarbamoyl-AMP (TC-AMP) to the N6 group of A37, together with TsaE and TsaB. TsaD likely plays a direct catalytic role in this reaction. The sequence is that of tRNA N6-adenosine threonylcarbamoyltransferase from Pediococcus pentosaceus (strain ATCC 25745 / CCUG 21536 / LMG 10740 / 183-1w).